The following is a 341-amino-acid chain: Mitochondrial dimethyladenosine transferase 1 (341 aa).

The transit peptide at 1–27 (MASSRTLGTFRLPPLPTIREIIKLFRL) directs the protein to the mitochondrion. Residues Leu-38, Gly-63, Glu-85, Lys-86, Asp-111, Val-112, and Asn-141 each coordinate S-adenosyl-L-methionine.

This sequence belongs to the class I-like SAM-binding methyltransferase superfamily. rRNA adenine N(6)-methyltransferase family. KsgA subfamily. As to quaternary structure, interacts with mitochondrial RNA polymerase POLRMT. Interacts with TFAM. Bound to the maturing mtSSU until the late stages of assembly.

The protein localises to the mitochondrion. It carries out the reaction adenosine(N)/adenosine(N+1) in rRNA + 4 S-adenosyl-L-methionine = N(6)-dimethyladenosine(N)/N(6)-dimethyladenosine(N+1) in rRNA + 4 S-adenosyl-L-homocysteine + 4 H(+). Mitochondrial methyltransferase which uses S-adenosyl methionine to dimethylate two highly conserved adjacent adenosine residues (A1583 and A1584) within the loop of helix 45 at the 3-prime end of 12S rRNA, thereby regulating the assembly or stability of the small subunit of the mitochondrial ribosome. Also required for basal transcription of mitochondrial DNA, probably via its interaction with POLRMT and TFAM. Stimulates transcription independently of the methyltransferase activity. This Bos taurus (Bovine) protein is Mitochondrial dimethyladenosine transferase 1 (TFB1M).